The sequence spans 113 residues: UPF0060 membrane protein Arth_4423 (113 aa).

The next 4 helical transmembrane spans lie at 7–27 (VLLF…VWQA), 33–53 (AWWW…VATL), 62–82 (ILAA…MVFD), and 91–111 (VIGS…PRGT).

The protein belongs to the UPF0060 family.

It is found in the cell membrane. The chain is UPF0060 membrane protein Arth_4423 from Arthrobacter sp. (strain FB24).